The following is a 317-amino-acid chain: ADIPOR-like receptor IZH1 (317 aa).

Residues 1–80 lie on the Lumenal side of the membrane; sequence MSEERGMKEQ…FNNESINIYT (80 aa). Residue asparagine 73 is glycosylated (N-linked (GlcNAc...) asparagine). Residues 81–101 form a helical membrane-spanning segment; that stretch reads HLIPGVAYLVLFLIFADLVLA. Residues 102-113 lie on the Cytoplasmic side of the membrane; the sequence is QLLPGLDAGEHR. A helical transmembrane segment spans residues 114–136; it reads MLRFYLLGAFTCLACSSCFHCLK. Over 137–148 the chain is Lumenal; the sequence is QHSEPHSRLWSK. The chain crosses the membrane as a helical span at residues 149–169; the sequence is VDYLGILAQITCSTISLLYYG. Over 170–175 the chain is Cytoplasmic; it reads YHSYPS. The chain crosses the membrane as a helical span at residues 176 to 196; it reads HFVFFSTLTVALCSACAVLVL. A glycan (N-linked (GlcNAc...) asparagine) is linked at asparagine 197. Over 197-210 the chain is Lumenal; the sequence is NDSFNTVAFRPLRA. Residues 211–231 traverse the membrane as a helical segment; it reads FLFMAFGLSGVIPVLAGSYQF. Over 232–243 the chain is Cytoplasmic; sequence GFAEWAARIQLK. Residues 244–264 form a helical membrane-spanning segment; sequence YVLYEAVFYITGALVYGFRIP. The Lumenal portion of the chain corresponds to 265-283; the sequence is ERFAPGKFDMVGHSHQIFH. The helical transmembrane segment at 284–304 threads the bilayer; that stretch reads LLVVLGTLCHFRAVTGSYIFI. Residues 305-317 are Cytoplasmic-facing; it reads CTGKHYSSLLMFI.

The protein belongs to the ADIPOR family.

The protein resides in the endoplasmic reticulum membrane. In terms of biological role, ADIPOR-like receptor involved in zinc metabolism either by altering membrane sterol content or by directly altering cellular zinc levels. This Eremothecium gossypii (strain ATCC 10895 / CBS 109.51 / FGSC 9923 / NRRL Y-1056) (Yeast) protein is ADIPOR-like receptor IZH1 (IZH1).